The following is a 227-amino-acid chain: MAYPFQLGLQDATSPIMEELTNFHDHTLMIVFLISSLVLYIISLMLTTKLTHTSTMDAQEVETIWTILPAAILVLIALPSLRILYMMDEINNPVLTVKTMGHQWYWSYEYTDYEDLCFDSYMIPTNELKPGDLRLLEVDNRVVLPMELPIRMLISSEDVLHSWAVPSLGLKTDAIPGRLNQATVTSNRPGLFYGQCSEICGANHSFMPIVLEMVPLKHFENWSASMV.

At 1–14 the chain is on the mitochondrial intermembrane side; the sequence is MAYPFQLGLQDATS. The chain crosses the membrane as a helical span at residues 15–45; the sequence is PIMEELTNFHDHTLMIVFLISSLVLYIISLM. At 46 to 59 the chain is on the mitochondrial matrix side; that stretch reads LTTKLTHTSTMDAQ. A helical membrane pass occupies residues 60–87; sequence EVETIWTILPAAILVLIALPSLRILYMM. The Mitochondrial intermembrane portion of the chain corresponds to 88–227; sequence DEINNPVLTV…HFENWSASMV (140 aa). Cu cation contacts are provided by H161, C196, E198, C200, H204, and M207. E198 lines the Mg(2+) pocket.

Belongs to the cytochrome c oxidase subunit 2 family. In terms of assembly, component of the cytochrome c oxidase (complex IV, CIV), a multisubunit enzyme composed of 14 subunits. The complex is composed of a catalytic core of 3 subunits MT-CO1, MT-CO2 and MT-CO3, encoded in the mitochondrial DNA, and 11 supernumerary subunits COX4I, COX5A, COX5B, COX6A, COX6B, COX6C, COX7A, COX7B, COX7C, COX8 and NDUFA4, which are encoded in the nuclear genome. The complex exists as a monomer or a dimer and forms supercomplexes (SCs) in the inner mitochondrial membrane with NADH-ubiquinone oxidoreductase (complex I, CI) and ubiquinol-cytochrome c oxidoreductase (cytochrome b-c1 complex, complex III, CIII), resulting in different assemblies (supercomplex SCI(1)III(2)IV(1) and megacomplex MCI(2)III(2)IV(2)). Found in a complex with TMEM177, COA6, COX18, COX20, SCO1 and SCO2. Interacts with TMEM177 in a COX20-dependent manner. Interacts with COX20. Interacts with COX16. Cu cation serves as cofactor.

Its subcellular location is the mitochondrion inner membrane. It catalyses the reaction 4 Fe(II)-[cytochrome c] + O2 + 8 H(+)(in) = 4 Fe(III)-[cytochrome c] + 2 H2O + 4 H(+)(out). Functionally, component of the cytochrome c oxidase, the last enzyme in the mitochondrial electron transport chain which drives oxidative phosphorylation. The respiratory chain contains 3 multisubunit complexes succinate dehydrogenase (complex II, CII), ubiquinol-cytochrome c oxidoreductase (cytochrome b-c1 complex, complex III, CIII) and cytochrome c oxidase (complex IV, CIV), that cooperate to transfer electrons derived from NADH and succinate to molecular oxygen, creating an electrochemical gradient over the inner membrane that drives transmembrane transport and the ATP synthase. Cytochrome c oxidase is the component of the respiratory chain that catalyzes the reduction of oxygen to water. Electrons originating from reduced cytochrome c in the intermembrane space (IMS) are transferred via the dinuclear copper A center (CU(A)) of subunit 2 and heme A of subunit 1 to the active site in subunit 1, a binuclear center (BNC) formed by heme A3 and copper B (CU(B)). The BNC reduces molecular oxygen to 2 water molecules using 4 electrons from cytochrome c in the IMS and 4 protons from the mitochondrial matrix. The sequence is that of Cytochrome c oxidase subunit 2 (MT-CO2) from Uromys caudimaculatus (Giant white-tailed rat).